A 237-amino-acid chain; its full sequence is Ubiquinone/menaquinone biosynthesis C-methyltransferase UbiE (237 aa).

S-adenosyl-L-methionine contacts are provided by Thr60 and Asp80.

It belongs to the class I-like SAM-binding methyltransferase superfamily. MenG/UbiE family.

The enzyme catalyses a 2-demethylmenaquinol + S-adenosyl-L-methionine = a menaquinol + S-adenosyl-L-homocysteine + H(+). It carries out the reaction a 2-methoxy-6-(all-trans-polyprenyl)benzene-1,4-diol + S-adenosyl-L-methionine = a 5-methoxy-2-methyl-3-(all-trans-polyprenyl)benzene-1,4-diol + S-adenosyl-L-homocysteine + H(+). It functions in the pathway quinol/quinone metabolism; menaquinone biosynthesis; menaquinol from 1,4-dihydroxy-2-naphthoate: step 2/2. It participates in cofactor biosynthesis; ubiquinone biosynthesis. In terms of biological role, methyltransferase required for the conversion of demethylmenaquinol (DMKH2) to menaquinol (MKH2) and the conversion of 2-polyprenyl-6-methoxy-1,4-benzoquinol (DDMQH2) to 2-polyprenyl-3-methyl-6-methoxy-1,4-benzoquinol (DMQH2). In Syntrophotalea carbinolica (strain DSM 2380 / NBRC 103641 / GraBd1) (Pelobacter carbinolicus), this protein is Ubiquinone/menaquinone biosynthesis C-methyltransferase UbiE.